Here is a 235-residue protein sequence, read N- to C-terminus: Protein MAINTENANCE OF PSII UNDER HIGH LIGHT 1 (235 aa).

A helical transmembrane segment spans residues 127-147 (TAAIVAGIALIAVAAASSILL). The disordered stretch occupies residues 181–235 (QPSTPSVTEAPPVAELETSLPETPSVAQQETSLPETMASEAQPEASSVPTTSSTS). 2 stretches are compositionally biased toward polar residues: residues 200 to 214 (LPET…TSLP) and 224 to 235 (EASSVPTTSSTS).

Interacts with psbA, psbB, psbC and psbD.

Its subcellular location is the plastid. It localises to the chloroplast thylakoid membrane. Interacts with photosystem II (PSII) core complexes and participates in the maintenance of normal PSII activity under photoinhibitory stress. May protect against photodamage or stabilize PSII under high-light stress. Participates in the maintainance of proper PSII function under high-light stress by protecting PSII from photooxidative damage. The protein is Protein MAINTENANCE OF PSII UNDER HIGH LIGHT 1 of Arabidopsis thaliana (Mouse-ear cress).